Reading from the N-terminus, the 198-residue chain is NAD(P)H dehydrogenase (quinone) (198 aa).

Residues 4–189 (VLVLYYSMYG…SIARYQGEYV (186 aa)) enclose the Flavodoxin-like domain. FMN-binding positions include 10 to 15 (SMYGHI) and 78 to 80 (TRF). Y12 contributes to the NAD(+) binding site. Substrate is bound at residue W98. FMN is bound by residues 113-118 (STGTGG) and H133.

This sequence belongs to the WrbA family. The cofactor is FMN.

The catalysed reaction is a quinone + NADH + H(+) = a quinol + NAD(+). It catalyses the reaction a quinone + NADPH + H(+) = a quinol + NADP(+). This is NAD(P)H dehydrogenase (quinone) from Escherichia coli O157:H7.